We begin with the raw amino-acid sequence, 138 residues long: ATP synthase epsilon chain (138 aa).

The protein belongs to the ATPase epsilon chain family. As to quaternary structure, F-type ATPases have 2 components, CF(1) - the catalytic core - and CF(0) - the membrane proton channel. CF(1) has five subunits: alpha(3), beta(3), gamma(1), delta(1), epsilon(1). CF(0) has three main subunits: a, b and c.

The protein localises to the cell inner membrane. In terms of biological role, produces ATP from ADP in the presence of a proton gradient across the membrane. The chain is ATP synthase epsilon chain from Ruthia magnifica subsp. Calyptogena magnifica.